Consider the following 348-residue polypeptide: NADH-ubiquinone oxidoreductase chain 2 (348 aa).

The next 11 membrane-spanning stretches (helical) occupy residues 1–21, 25–45, 60–80, 99–119, 124–144, 151–171, 178–197, 202–224, 239–259, 274–294, and 326–346; these read MNPY…TLTF, HWIL…PLMA, FLIQ…NAWI, MFAL…PEVL, LLTG…LIIQ, PLIL…SGLN, ILAY…IQYA, LIAL…VLSA, ILAA…PLTG, DLPA…FFYL, and LTIS…ILML.

Belongs to the complex I subunit 2 family. In terms of assembly, core subunit of respiratory chain NADH dehydrogenase (Complex I) which is composed of 45 different subunits.

It localises to the mitochondrion inner membrane. The catalysed reaction is a ubiquinone + NADH + 5 H(+)(in) = a ubiquinol + NAD(+) + 4 H(+)(out). In terms of biological role, core subunit of the mitochondrial membrane respiratory chain NADH dehydrogenase (Complex I) which catalyzes electron transfer from NADH through the respiratory chain, using ubiquinone as an electron acceptor. Essential for the catalytic activity and assembly of complex I. This chain is NADH-ubiquinone oxidoreductase chain 2 (mt-nd2), found in Danio rerio (Zebrafish).